We begin with the raw amino-acid sequence, 436 residues long: 3-ketoacyl-CoA thiolase (436 aa).

Cysteine 99 functions as the Acyl-thioester intermediate in the catalytic mechanism. Residues histidine 392 and cysteine 422 each act as proton acceptor in the active site.

The protein belongs to the thiolase-like superfamily. Thiolase family. As to quaternary structure, heterotetramer of two alpha chains (FadJ) and two beta chains (FadI).

The protein localises to the cytoplasm. The enzyme catalyses an acyl-CoA + acetyl-CoA = a 3-oxoacyl-CoA + CoA. The protein operates within lipid metabolism; fatty acid beta-oxidation. In terms of biological role, catalyzes the final step of fatty acid oxidation in which acetyl-CoA is released and the CoA ester of a fatty acid two carbons shorter is formed. In Escherichia coli (strain 55989 / EAEC), this protein is 3-ketoacyl-CoA thiolase.